Consider the following 28-residue polypeptide: Toxin a (28 aa).

The 26-residue stretch at Val3–Ile28 folds into the LCN-type CS-alpha/beta domain.

The protein belongs to the long (3 C-C) scorpion toxin superfamily. In terms of tissue distribution, expressed by the venom gland.

The protein localises to the secreted. In terms of biological role, binds to sodium channels (Nav) and affects the channel activation process. The polypeptide is Toxin a (Androctonus crassicauda (Arabian fat-tailed scorpion)).